Reading from the N-terminus, the 705-residue chain is Polyribonucleotide nucleotidyltransferase (705 aa).

Mg(2+) contacts are provided by Asp486 and Asp492. Residues 553–612 (PRIIKFKINPEKIRDVIGKGGAVIRALTEETGTTIDISDDGSVTIASISNEGGEQAKRRI) form the KH domain. Residues 622–690 (GKIYEGTVLK…DKGRLRLSMK (69 aa)) form the S1 motif domain.

Belongs to the polyribonucleotide nucleotidyltransferase family. Requires Mg(2+) as cofactor.

It localises to the cytoplasm. It catalyses the reaction RNA(n+1) + phosphate = RNA(n) + a ribonucleoside 5'-diphosphate. Functionally, involved in mRNA degradation. Catalyzes the phosphorolysis of single-stranded polyribonucleotides processively in the 3'- to 5'-direction. This is Polyribonucleotide nucleotidyltransferase from Nitrosomonas eutropha (strain DSM 101675 / C91 / Nm57).